An 852-amino-acid polypeptide reads, in one-letter code: Envelope glycoprotein gp160 (852 aa).

The first 32 residues, 1 to 32, serve as a signal peptide directing secretion; sequence MRVKGIKKNYQHLWRWGGMMLLGILMICSATD. The Extracellular segment spans residues 33-680; that stretch reads KLWVTVYYGV…ITNWLWYIKI (648 aa). N-linked (GlcNAc...) asparagine; by host glycosylation is present at N49. A disulfide bridge connects residues C54 and C74. Residues N88, N135, N138, N154, N158, N197, N234, N241, N262, N276, N289, N295, N301, N331, N354, and N360 are each glycosylated (N-linked (GlcNAc...) asparagine; by host). 5 disulfides stabilise this stretch: C119–C205, C126–C196, C131–C155, C218–C247, and C228–C239. The segment at 131–154 is V1; the sequence is CHDFNATNATSNSGKMMEGGEMKN. The tract at residues 155–196 is V2; the sequence is CSFNITTSIRDKMQKEYALFYKLDIVPIDNDKTNTRYRLISC. The tract at residues 296-329 is V3; it reads CTRPNNNTRKRITMGPGRVYYTTGQIIGDIRRAH. C296 and C330 are joined by a disulfide. The CD4-binding loop stretch occupies residues 362–372; that stretch reads SSGGDPEIVMH. Cystine bridges form between C376/C439 and C383/C412. The tract at residues 383–412 is V4; it reads CNTTQLFNSTWYRNTTGNITEGNSPITLPC. Residues N384, N390, N396, N400, N442, and N456 are each glycosylated (N-linked (GlcNAc...) asparagine; by host). V5 regions lie at residues 454–467 and 457–467; these read NNNE…FRPG and ETTDTEIFRPG. The segment at 508-528 is fusion peptide; it reads AVGLGALFLGFLGAAGSTMGA. The interval 570–588 is immunosuppression; it reads KQLQARVLAVERYLKDQQL. A disulfide bond links C594 and C600. N-linked (GlcNAc...) asparagine; by host glycans are attached at residues N607, N612, N621, N633, and N670. A coiled-coil region spans residues 629 to 663; it reads REIDNYTNLIYSLIEDSQIQQEKNEKELLELDKWA. The tract at residues 658-679 is MPER; binding to GalCer; it reads ELDKWASLWNWFNITNWLWYIK. Residues 681-701 form a helical membrane-spanning segment; sequence FIMIVGGLIGLRIVFAVLSIV. Residues 702 to 852 lie on the Cytoplasmic side of the membrane; the sequence is NRVRQGYSPL…IRQGLERALQ (151 aa). The YXXL motif; contains endocytosis signal motif lies at 708 to 711; that stretch reads YSPL. The tract at residues 715–741 is disordered; sequence TRLPGRRGPDRPEGIEEEGGERDRDRS.

Belongs to the HIV-1 env protein family. The mature envelope protein (Env) consists of a homotrimer of non-covalently associated gp120-gp41 heterodimers. The resulting complex protrudes from the virus surface as a spike. There seems to be as few as 10 spikes on the average virion. Interacts with host CD4, CCR5 and CXCR4. Gp120 also interacts with the C-type lectins CD209/DC-SIGN and CLEC4M/DC-SIGNR (collectively referred to as DC-SIGN(R)). Gp120 and gp41 interact with GalCer. Gp120 interacts with host ITGA4/ITGB7 complex; on CD4+ T-cells, this interaction results in rapid activation of integrin ITGAL/LFA-1, which facilitates efficient cell-to-cell spreading of HIV-1. Gp120 interacts with cell-associated heparan sulfate; this interaction increases virus infectivity on permissive cells and may be involved in infection of CD4- cells. As to quaternary structure, the mature envelope protein (Env) consists of a homotrimer of non-covalently associated gp120-gp41 heterodimers. The resulting complex protrudes from the virus surface as a spike. There seems to be as few as 10 spikes on the average virion. In terms of processing, highly glycosylated by host. The high number of glycan on the protein is reffered to as 'glycan shield' because it contributes to hide protein sequence from adaptive immune system. Post-translationally, palmitoylation of the transmembrane protein and of Env polyprotein (prior to its proteolytic cleavage) is essential for their association with host cell membrane lipid rafts. Palmitoylation is therefore required for envelope trafficking to classical lipid rafts, but not for viral replication. Specific enzymatic cleavages in vivo yield mature proteins. Envelope glycoproteins are synthesized as an inactive precursor that is heavily N-glycosylated and processed likely by host cell furin in the Golgi to yield the mature SU and TM proteins. The cleavage site between SU and TM requires the minimal sequence [KR]-X-[KR]-R. About 2 of the 9 disulfide bonds of gp41 are reduced by P4HB/PDI, following binding to CD4 receptor.

Its subcellular location is the virion membrane. It is found in the host cell membrane. The protein resides in the host endosome membrane. Functionally, oligomerizes in the host endoplasmic reticulum into predominantly trimers. In a second time, gp160 transits in the host Golgi, where glycosylation is completed. The precursor is then proteolytically cleaved in the trans-Golgi and thereby activated by cellular furin or furin-like proteases to produce gp120 and gp41. In terms of biological role, attaches the virus to the host lymphoid cell by binding to the primary receptor CD4. This interaction induces a structural rearrangement creating a high affinity binding site for a chemokine coreceptor like CXCR4 and/or CCR5. Acts as a ligand for CD209/DC-SIGN and CLEC4M/DC-SIGNR, which are respectively found on dendritic cells (DCs), and on endothelial cells of liver sinusoids and lymph node sinuses. These interactions allow capture of viral particles at mucosal surfaces by these cells and subsequent transmission to permissive cells. HIV subverts the migration properties of dendritic cells to gain access to CD4+ T-cells in lymph nodes. Virus transmission to permissive T-cells occurs either in trans (without DCs infection, through viral capture and transmission), or in cis (following DCs productive infection, through the usual CD4-gp120 interaction), thereby inducing a robust infection. In trans infection, bound virions remain infectious over days and it is proposed that they are not degraded, but protected in non-lysosomal acidic organelles within the DCs close to the cell membrane thus contributing to the viral infectious potential during DCs' migration from the periphery to the lymphoid tissues. On arrival at lymphoid tissues, intact virions recycle back to DCs' cell surface allowing virus transmission to CD4+ T-cells. Acts as a class I viral fusion protein. Under the current model, the protein has at least 3 conformational states: pre-fusion native state, pre-hairpin intermediate state, and post-fusion hairpin state. During fusion of viral and target intracellular membranes, the coiled coil regions (heptad repeats) assume a trimer-of-hairpins structure, positioning the fusion peptide in close proximity to the C-terminal region of the ectodomain. The formation of this structure appears to drive apposition and subsequent fusion of viral and target cell membranes. Complete fusion occurs in host cell endosomes and is dynamin-dependent, however some lipid transfer might occur at the plasma membrane. The virus undergoes clathrin-dependent internalization long before endosomal fusion, thus minimizing the surface exposure of conserved viral epitopes during fusion and reducing the efficacy of inhibitors targeting these epitopes. Membranes fusion leads to delivery of the nucleocapsid into the cytoplasm. The protein is Envelope glycoprotein gp160 of Human immunodeficiency virus type 1 group M subtype B (isolate BRVA) (HIV-1).